A 311-amino-acid polypeptide reads, in one-letter code: Protoheme IX farnesyltransferase (311 aa).

The next 9 helical transmembrane spans lie at 32-52, 53-73, 98-118, 120-140, 153-173, 180-200, 226-246, 248-268, and 285-305; these read VMSL…VVVD, PLYG…AGAL, ISRG…VFLM, VLIN…YIVI, IVIG…AATG, FLLF…LCLF, ILVY…TGYA, IIYG…AYRL, and FFFS…EFLI.

It belongs to the UbiA prenyltransferase family. Protoheme IX farnesyltransferase subfamily.

Its subcellular location is the cell inner membrane. The enzyme catalyses heme b + (2E,6E)-farnesyl diphosphate + H2O = Fe(II)-heme o + diphosphate. It participates in porphyrin-containing compound metabolism; heme O biosynthesis; heme O from protoheme: step 1/1. Its function is as follows. Converts heme B (protoheme IX) to heme O by substitution of the vinyl group on carbon 2 of heme B porphyrin ring with a hydroxyethyl farnesyl side group. The chain is Protoheme IX farnesyltransferase from Bartonella bacilliformis (strain ATCC 35685 / KC583 / Herrer 020/F12,63).